The chain runs to 475 residues: Ankyrin repeat, SAM and basic leucine zipper domain-containing protein 1 (475 aa).

The segment at 1 to 23 is disordered; that stretch reads MAAARFRGLAVAGGGESSESEDD. 3 positions are modified to phosphoserine: S17, S18, and S20. 6 ANK repeats span residues 45–74, 78–107, 110–144, 148–177, 181–210, and 214–243; these read EKNE…SVDS, YGWT…KASF, DKQT…DPNV, RLMT…EVNT, NGYT…NKML, and DGKT…PLEG. The SAM domain occupies 272 to 334; it reads SYTAFGDLEI…KILAALKELE (63 aa).

In terms of assembly, interacts with DDX4, PIWIL1, RANBP9 and TDRD1.

The protein localises to the cytoplasm. Functionally, plays a central role during spermatogenesis by repressing transposable elements and preventing their mobilization, which is essential for the germline integrity. Acts via the piRNA metabolic process, which mediates the repression of transposable elements during meiosis by forming complexes composed of piRNAs and Piwi proteins and governs the methylation and subsequent repression of transposons. Its association with pi-bodies suggests a participation in the primary piRNAs metabolic process. Required prior to the pachytene stage to facilitate the production of multiple types of piRNAs, including those associated with repeats involved in the regulation of retrotransposons. May act by mediating protein-protein interactions during germ cell maturation. The sequence is that of Ankyrin repeat, SAM and basic leucine zipper domain-containing protein 1 (ASZ1) from Equus caballus (Horse).